The chain runs to 152 residues: Small ribosomal subunit protein uS13 (152 aa).

At serine 41 the chain carries Phosphoserine.

Belongs to the universal ribosomal protein uS13 family.

It localises to the cytoplasm. Functionally, located at the top of the head of the 40S subunit, it contacts several helices of the 18S rRNA. This chain is Small ribosomal subunit protein uS13 (RpS18), found in Drosophila melanogaster (Fruit fly).